The primary structure comprises 197 residues: Syndecan-4 (197 aa).

An N-terminal signal peptide occupies residues 1-19; it reads MPLPRAAFLLGLLLAAAAA. At 20–147 the chain is on the extracellular side; it reads ESVRETETMD…SIFERTEVLT (128 aa). Ser38, Ser65, and Ser67 each carry an O-linked (Xyl...) (glycosaminoglycan) serine glycan. Residues Asn124 and Asn136 are each glycosylated (N-linked (GlcNAc...) asparagine). Residues 148–168 form a helical membrane-spanning segment; that stretch reads ALIAGGAVGLLFAVFLILLLV. Over 169–197 the chain is Cytoplasmic; the sequence is YRMKKKDEGSYDLGKKPIYKKAPTNEFYA.

It belongs to the syndecan proteoglycan family. In terms of assembly, interacts with SDOS. Post-translationally, O-glycosylated; contains both chondroitin sulfate and heparan sulfate. Ser-38, Ser-65 and Ser-67 can all be modified by either chondroitin sulfate or heparan sulfate, and the protein exists in forms that contain only chondroitin sulfate, only heparan sulfate and both chondroitin sulfate and heparan sulfate.

It is found in the membrane. Functionally, cell surface proteoglycan which regulates exosome biogenesis in concert with SDCBP and PDCD6IP. The sequence is that of Syndecan-4 (SDC4) from Gallus gallus (Chicken).